Reading from the N-terminus, the 340-residue chain is MIFIDACLKKKTPYTPVWMMRQAGRYLPEYMKVRNEVGGFLELCKNYKKASEVTIQPVEILGVDAAILFSDILVIPLEMGMDLHFIKGEGPIFESPVKNENDLAKLSLQKAVKNLQYVYDTISLTREKLPKDKALIGFCGAPWTIATYMIEGKGSKTYSVCKKLLYTNPEFLHKILTLITETLKLYLENQIKSGVNTVQIFDSWASALECEAFFEFSWKYIIEICDFIKAKYPQIPIIVFPKGISGYLDKIYGNFDVFGVDWSTPLESASKILSAKYTLQGNMEPCRLYNKNAIKESVEQILNTMKGKPHIFNLGHGILPDIPVENAKYFIRLVQERSSL.

Substrate-binding positions include 21-25 (RQAGR), Asp-71, Tyr-148, Ser-203, and His-316.

Belongs to the uroporphyrinogen decarboxylase family. Homodimer.

It is found in the cytoplasm. It catalyses the reaction uroporphyrinogen III + 4 H(+) = coproporphyrinogen III + 4 CO2. Its pathway is porphyrin-containing compound metabolism; protoporphyrin-IX biosynthesis; coproporphyrinogen-III from 5-aminolevulinate: step 4/4. Catalyzes the decarboxylation of four acetate groups of uroporphyrinogen-III to yield coproporphyrinogen-III. The protein is Uroporphyrinogen decarboxylase of Campylobacter hominis (strain ATCC BAA-381 / DSM 21671 / CCUG 45161 / LMG 19568 / NCTC 13146 / CH001A).